Consider the following 236-residue polypeptide: Small ribosomal subunit protein uS2c (236 aa).

This sequence belongs to the universal ribosomal protein uS2 family.

It localises to the plastid. The protein localises to the chloroplast. The polypeptide is Small ribosomal subunit protein uS2c (rps2) (Lotus japonicus (Lotus corniculatus var. japonicus)).